The sequence spans 587 residues: Tripartite motif-containing protein 29 (587 aa).

Residues 1–71 (MEGADACRSN…SGEGKSGLFS (71 aa)) are disordered. Residues Ser-21, Ser-28, Ser-58, and Ser-104 each carry the phosphoserine modification. Tyr-106 carries the phosphotyrosine modification. The B box-type zinc-finger motif lies at 220–260 (FEARKCPLHGKTMELFCQTDQTCICYLCMFQEHKNHSTVTV). Residues Cys-225, His-228, Cys-247, and His-252 each contribute to the Zn(2+) site. Residues 259-348 (TVEEAKAEKE…AVDQVKVIVD (90 aa)) adopt a coiled-coil conformation. Position 476 is a phosphothreonine (Thr-476). A Phosphoserine modification is found at Ser-489.

Interacts with VIM and HINT1. Interacts with IKBKG/NEMO. Interacts with STING1.

The protein resides in the cytoplasm. It localises to the lysosome. In terms of biological role, plays a crucial role in the regulation of macrophage activation in response to viral or bacterial infections within the respiratory tract. Mechanistically, TRIM29 interacts with IKBKG/NEMO in the lysosome where it induces its 'Lys-48' ubiquitination and subsequent degradation. In turn, the expression of type I interferons and the production of pro-inflammatory cytokines are inhibited. Additionally, induces the 'Lys-48' ubiquitination of STING1 in a similar way, leading to its degradation. The polypeptide is Tripartite motif-containing protein 29 (Trim29) (Mus musculus (Mouse)).